Here is a 273-residue protein sequence, read N- to C-terminus: Probable cysteine-rich repeat secretory protein 6 (273 aa).

Positions 1-21 (MTRIIDVSLFCFFLFSLGAMS) are cleaved as a signal peptide. Gnk2-homologous domains are found at residues 22 to 122 (QPSQ…DNSF) and 128 to 241 (DSPA…ISAL).

This sequence belongs to the cysteine-rich repeat secretory protein family.

The protein localises to the secreted. This chain is Probable cysteine-rich repeat secretory protein 6 (CRRSP6), found in Arabidopsis thaliana (Mouse-ear cress).